The chain runs to 331 residues: Nucleotide sugar transporter SLC35B4 (331 aa).

The next 11 membrane-spanning stretches (helical) occupy residues 4 to 24 (ALAVGLVFAGCCSNVIFLELL), 30 to 50 (GCGNIVTFAQFLFIAVEGFLF), 59 to 79 (PAIPIRYYAIMVTMFFTVSVV), 92 to 112 (LHMIFRSGSLIANMILGIIIL), 117 to 137 (SIFKYTSIALVSVGIFICTFM), 153 to 173 (GFQAFVWWLLGIGALTFALLM), 201 to 221 (ALPLPGFVFLASDIYDHAVLF), 229 to 249 (IPVIGVTLPIMWFYLLMNIIT), 251 to 267 (YVCIRGVFILTTECASL), 268 to 288 (TVTLVVTLRKFVSLIFSILYF), and 291 to 311 (PFTLWHWLGTLFVFIGTLMYT). The Mediates endoplasmic reticulum retention motif lies at 326 to 331 (KDSKKN).

This sequence belongs to the nucleotide-sugar transporter family. SLC35B subfamily.

It localises to the endoplasmic reticulum membrane. The catalysed reaction is UDP-N-acetyl-alpha-D-glucosamine(in) + UDP-alpha-D-glucuronate(out) = UDP-N-acetyl-alpha-D-glucosamine(out) + UDP-alpha-D-glucuronate(in). It carries out the reaction UDP-alpha-D-xylose(in) + UDP-alpha-D-glucuronate(out) = UDP-alpha-D-xylose(out) + UDP-alpha-D-glucuronate(in). Functionally, antiporter that transports nucleotide sugars across the endoplasmic reticulum (ER) membrane in exchange for another nucleotide sugar. May couple UDP-alpha-D-glucuronate (UDP-GlcA) or UDP-alpha-D-xylose (UDP-Xyl) efflux to UDP-alpha-D-glucuronate (UDP-GlcA) influx into the ER lumen, which in turn stimulates glucuronidation and excretion of endobiotics and xenobiotics. This chain is Nucleotide sugar transporter SLC35B4 (SLC35B4), found in Pongo abelii (Sumatran orangutan).